Here is a 151-residue protein sequence, read N- to C-terminus: UPF0178 protein amb2838 (151 aa).

The protein belongs to the UPF0178 family.

The polypeptide is UPF0178 protein amb2838 (Paramagnetospirillum magneticum (strain ATCC 700264 / AMB-1) (Magnetospirillum magneticum)).